Consider the following 296-residue polypeptide: Cytidine deaminase (296 aa).

CMP/dCMP-type deaminase domains lie at 47–167 (EESE…FGPS) and 186–296 (DSSD…IDPA). Position 88–90 (88–90 (NLE)) interacts with substrate. His101 is a Zn(2+) binding site. The Proton donor role is filled by Glu103. Residues Cys128 and Cys131 each contribute to the Zn(2+) site.

This sequence belongs to the cytidine and deoxycytidylate deaminase family. Homodimer. The cofactor is Zn(2+).

It carries out the reaction cytidine + H2O + H(+) = uridine + NH4(+). The enzyme catalyses 2'-deoxycytidine + H2O + H(+) = 2'-deoxyuridine + NH4(+). In terms of biological role, this enzyme scavenges exogenous and endogenous cytidine and 2'-deoxycytidine for UMP synthesis. In Shewanella woodyi (strain ATCC 51908 / MS32), this protein is Cytidine deaminase.